Consider the following 1413-residue polypeptide: Zinc finger protein 609 (1413 aa).

5 disordered regions span residues 1 to 26, 47 to 196, 354 to 484, 517 to 659, and 695 to 765; these read MSLS…SGDE, QKLE…GRGS, RFCD…EPTL, AHAH…RPIA, and PNSP…AAGD. Ser358, Ser361, and Ser379 each carry phosphoserine. Thr381 bears the Phosphothreonine mark. Positions 386–405 are enriched in low complexity; that stretch reads AAAASDSKGTSSSSKTRAGA. Ser413, Ser433, Ser446, Ser452, Ser467, and Ser470 each carry phosphoserine. The segment covering 423–437 has biased composition (polar residues); that stretch reads ASSTSEDVKASPSSA. A Glycyl lysine isopeptide (Lys-Gly) (interchain with G-Cter in SUMO2) cross-link involves residue Lys479. The C2H2-type zinc-finger motif lies at 495–520; sequence IDCPHPNCNKKYKHINGLKYHQAHAH. Residues 519–529 show a composition bias toward basic and acidic residues; the sequence is AHTDDDSKPEA. A phosphoserine mark is found at Ser533, Ser575, and Ser577. Positions 625 to 648 are enriched in basic and acidic residues; it reads SLERKCMEKEKCKKPSSLKSEKIP. A compositionally biased stretch (basic residues) spans 725 to 735; sequence DKKKKDKKKKD. Ser742 is modified (phosphoserine). The residue at position 745 (Thr745) is a Phosphothreonine. Over residues 750-763 the composition is skewed to basic and acidic residues; it reads CRAEEGKSPFRDAA. Ser757 carries the post-translational modification Phosphoserine. A Glycyl lysine isopeptide (Lys-Gly) (interchain with G-Cter in SUMO2) cross-link involves residue Lys788. Residues 797–843 show a composition bias toward polar residues; it reads FTDNAPSPSIGGSSRLDSTTPTQPLTPLHVVTQNGAEASSVKTNSPA. 4 disordered regions span residues 797–962, 1004–1127, 1154–1221, and 1273–1369; these read FTDN…VIQQ, YEEQ…RQAE, IKSE…SPLT, and SKVS…STHH. The residue at position 803 (Ser803) is a Phosphoserine. Position 822 is a phosphothreonine (Thr822). 3 positions are modified to phosphoserine: Ser841, Ser845, and Ser848. Residues 854–875 are compositionally biased toward basic and acidic residues; that stretch reads GEGKVDSAKSKDPEQLVKEGAK. Polar residues predominate over residues 902–916; sequence YAQSSPGTLTSSSQA. Residues 925–949 are compositionally biased toward basic and acidic residues; that stretch reads TKKDEEPESVEGKVKNDVCEEKKPE. Positions 950–962 are enriched in polar residues; it reads LSNSSQQPSVIQQ. Residues 1022 to 1044 are compositionally biased toward basic and acidic residues; sequence GLDKKTEMGLKEREASLKEEWKQ. Position 1057 is a phosphoserine (Ser1057). Lys1063 is covalently cross-linked (Glycyl lysine isopeptide (Lys-Gly) (interchain with G-Cter in SUMO2)). 3 stretches are compositionally biased toward basic and acidic residues: residues 1099–1115, 1154–1189, and 1197–1210; these read LKGK…EASE, IKSE…KEST, and PSEE…EPRP. Lys1155 is covalently cross-linked (Glycyl lysine isopeptide (Lys-Gly) (interchain with G-Cter in SUMO2)). The segment covering 1288–1298 has biased composition (polar residues); that stretch reads PSVSCKASSES. Residue Lys1299 forms a Glycyl lysine isopeptide (Lys-Gly) (interchain with G-Cter in SUMO2) linkage. Gly residues predominate over residues 1330–1348; it reads GCGVVGGGGSCGSVAGAGG.

In terms of assembly, interacts (via N-terminus) with NIPBL. Interacts with the multiprotein complex Integrator. In terms of tissue distribution, expressed in myoblasts. Expressed in neurons in various brain regions, including striatum, prefrontal cortex, olfactory bulb, midbrain, cerebellum and hippocampus. Expressed in neural stem cells (at protein level). Expressed in thymocytes.

Its subcellular location is the nucleus. Functionally, transcription factor, which activates RAG1, and possibly RAG2, transcription. Through the regulation of RAG1/2 expression, may regulate thymocyte maturation. Along with NIPBL and the multiprotein complex Integrator, promotes cortical neuron migration during brain development by regulating the transcription of crucial genes in this process. Preferentially binds promoters containing paused RNA polymerase II. Up-regulates the expression of SEMA3A, NRP1, PLXND1 and GABBR2 genes, among others. In terms of biological role, involved in regulation of myoblast proliferation during myogenesis. This chain is Zinc finger protein 609 (Znf609), found in Mus musculus (Mouse).